A 247-amino-acid polypeptide reads, in one-letter code: 3-oxoacyl-[acyl-carrier-protein] reductase (247 aa).

11–35 (VTGASRGIGKATALALAATGMKVVV) provides a ligand contact to NADP(+). A substrate-binding site is contributed by S143. Y156 (proton acceptor) is an active-site residue.

Belongs to the short-chain dehydrogenases/reductases (SDR) family.

The catalysed reaction is a (3R)-hydroxyacyl-[ACP] + NADP(+) = a 3-oxoacyl-[ACP] + NADPH + H(+). Its pathway is lipid metabolism; fatty acid biosynthesis. Its function is as follows. Catalyzes the NADPH-dependent reduction of beta-ketoacyl-ACP substrates to beta-hydroxyacyl-ACP products, the first reductive step in the elongation cycle of fatty acid biosynthesis. Is capable of reducing acetoacetyl-CoA, but less well than its paralog PhaB. The polypeptide is 3-oxoacyl-[acyl-carrier-protein] reductase (fabG) (Synechocystis sp. (strain ATCC 27184 / PCC 6803 / Kazusa)).